The primary structure comprises 36 residues: Potassium channel toxin alpha-KTx 6.14 (36 aa).

4 disulfide bridges follow: C5–C25, C11–C30, C15–C32, and C20–C35.

As to expression, expressed by the venom gland.

It localises to the secreted. In terms of biological role, blocks Shaker B channels expressed in Sf9 cells, with a dissociation constant of 52 nM. The protein is Potassium channel toxin alpha-KTx 6.14 of Hoffmannihadrurus gertschi (Scorpion).